A 760-amino-acid polypeptide reads, in one-letter code: Mitochondrial intermediate peptidase (760 aa).

A mitochondrion-targeting transit peptide spans 1–19 (MLARSVRTLVVSPKTVFRF). His543 provides a ligand contact to Zn(2+). Glu544 is a catalytic residue. His547 is a binding site for Zn(2+).

This sequence belongs to the peptidase M3 family. The cofactor is Zn(2+).

It is found in the mitochondrion matrix. It carries out the reaction Release of an N-terminal octapeptide as second stage of processing of some proteins imported into the mitochondrion.. Cleaves proteins, imported into the mitochondrion, to their mature size. While most mitochondrial precursor proteins are processed to the mature form in one step by mitochondrial processing peptidase (MPP), the sequential cleavage by MIP of an octapeptide after initial processing by MPP is a required step for a subgroup of nuclear-encoded precursor proteins destined for the matrix or the inner membrane. This Leucoagaricus gongylophorus (Leaf-cutting ant fungus) protein is Mitochondrial intermediate peptidase (OCT1).